The following is a 336-amino-acid chain: Probable allantoicase (336 aa).

Belongs to the allantoicase family.

The catalysed reaction is allantoate + H2O = (S)-ureidoglycolate + urea. The protein operates within nitrogen metabolism; (S)-allantoin degradation; (S)-ureidoglycolate from allantoate (aminidohydrolase route): step 1/1. The protein is Probable allantoicase of Acinetobacter baumannii (strain ATCC 17978 / DSM 105126 / CIP 53.77 / LMG 1025 / NCDC KC755 / 5377).